The following is a 123-amino-acid chain: Glycophorin-B (123 aa).

The first 19 residues, Met1–Ala19, serve as a signal peptide directing secretion. A helical transmembrane segment spans residues Val93–Ile113.

Belongs to the glycophorin-A family. Component of the ankyrin-1 complex in the erythrocyte, composed of ANK1, RHCE, RHAG, SLC4A1, EPB42, GYPA, GYPB and AQP1. Interacts (via the N-terminal) with RHAG; this interaction bridges the (RHAG)2(RHCE) heterotrimer with the SLC4A1 Band 3 I dimer complexed with GYPA. In terms of processing, the N-terminal extracellular domain is heavily glycosylated on serine and threonine residues.

It is found in the cell membrane. Its function is as follows. Component of the ankyrin-1 complex, a multiprotein complex involved in the stability and shape of the erythrocyte membrane. In Pan troglodytes (Chimpanzee), this protein is Glycophorin-B.